Reading from the N-terminus, the 213-residue chain is MYQDKILVRQLGLQPYEPISRAMHEFTDTRDNSTLDEIWLVEHYPVFTQGQAGKAEHILMPGDIPVIQSDRGGQVTYHGPGQQVMYVLLNLKRRKLGVRELVTLLEQTVVNTLAELGIEAHPRADAPGVYVGEKKICSLGLRIRRGCSFHGLALNVNMDLSPFLRINPCGYAGMEMAKISQWKPEATTNNIAPRLLENILALLNNPDFEYITA.

Residues 32 to 207 form the BPL/LPL catalytic domain; the sequence is NSTLDEIWLV…NILALLNNPD (176 aa). Substrate contacts are provided by residues 71 to 78, 138 to 140, and 151 to 153; these read RGGQVTYH, SLG, and GLA. Catalysis depends on Cys169, which acts as the Acyl-thioester intermediate.

This sequence belongs to the LipB family.

The protein resides in the cytoplasm. The catalysed reaction is octanoyl-[ACP] + L-lysyl-[protein] = N(6)-octanoyl-L-lysyl-[protein] + holo-[ACP] + H(+). It participates in protein modification; protein lipoylation via endogenous pathway; protein N(6)-(lipoyl)lysine from octanoyl-[acyl-carrier-protein]: step 1/2. Functionally, catalyzes the transfer of endogenously produced octanoic acid from octanoyl-acyl-carrier-protein onto the lipoyl domains of lipoate-dependent enzymes. Lipoyl-ACP can also act as a substrate although octanoyl-ACP is likely to be the physiological substrate. This Shigella flexneri serotype 5b (strain 8401) protein is Octanoyltransferase.